The following is a 410-amino-acid chain: MNNKLFLRNKQHINLGTIGHVDHGKTTLTTAISYLLNLQGLSKKYNYSDIDSAPEEKIRGITINTTHIEYETLTKHCAHIDCPGHSDYIKNMIIGATQMDIAILVISIIDGIMPQTYEHLLLIKQIGIKNIIIFLNKEDLCDDVELIDFIKLEVNELLIKYNFDLNYIHILTGSALNVINIIQKNKDYELIKSNIWIQKLNNLIQIIDNIIIPTRKINDYFLMSIEDVFSITGRGTVVTGKIEQGCINLNDEIEILKFEKSSPNLTTVIGLEMFKKQLTQAQSGDNVGILLRNIQKKDIKRGMILATPNKLKVYKSFIAETYILTKEEGGRHKPFNIGYKPQFFIRTVDVTGEIKNIYLNENVQKVAIPGDKITLHIELKHYIVLTLNMKFSIREGGKTIGAGIITEIKN.

The region spanning 10 to 214 (KQHINLGTIG…QIIDNIIIPT (205 aa)) is the tr-type G domain. The segment at 19–26 (GHVDHGKT) is G1. Position 19 to 26 (19 to 26 (GHVDHGKT)) interacts with GTP. T26 is a Mg(2+) binding site. The segment at 60–64 (GITIN) is G2. Residues 81 to 84 (DCPG) form a G3 region. GTP contacts are provided by residues 81-85 (DCPGH) and 136-139 (NKED). Residues 136–139 (NKED) form a G4 region. A G5 region spans residues 174-176 (SAL).

It belongs to the TRAFAC class translation factor GTPase superfamily. Classic translation factor GTPase family. EF-Tu/EF-1A subfamily.

Its subcellular location is the plastid. The protein localises to the apicoplast. It catalyses the reaction GTP + H2O = GDP + phosphate + H(+). Its function is as follows. GTP hydrolase that promotes the GTP-dependent binding of aminoacyl-tRNA to the A-site of ribosomes during protein biosynthesis. This is Elongation factor Tu, apicoplast (tufA) from Plasmodium falciparum (isolate 3D7).